Consider the following 207-residue polypeptide: Probable RNA 2'-phosphotransferase (207 aa).

This sequence belongs to the KptA/TPT1 family.

Its function is as follows. Removes the 2'-phosphate from RNA via an intermediate in which the phosphate is ADP-ribosylated by NAD followed by a presumed transesterification to release the RNA and generate ADP-ribose 1''-2''-cyclic phosphate (APPR&gt;P). May function as an ADP-ribosylase. The protein is Probable RNA 2'-phosphotransferase of Methanosarcina barkeri (strain Fusaro / DSM 804).